Reading from the N-terminus, the 390-residue chain is Protein arginine N-methyltransferase 1.1 (390 aa).

Residues 1 to 10 (MTKNSNHDEN) show a composition bias toward basic and acidic residues. The disordered stretch occupies residues 1–59 (MTKNSNHDENEFISFEPNQNTKIRFEDADEDEVAEGSGVAGEETPQDESMFDAGESADT). The SAM-dependent MTase PRMT-type domain maps to 69–390 (ADYYFDSYSH…ISRTQHYKMR (322 aa)). Active-site residues include E181 and E190.

It belongs to the class I-like SAM-binding methyltransferase superfamily. Protein arginine N-methyltransferase family. As to quaternary structure, interacts with PRMT12, MBD7 and FIB2.

It is found in the nucleus. The protein resides in the cytoplasm. The catalysed reaction is L-arginyl-[protein] + 2 S-adenosyl-L-methionine = N(omega),N(omega)-dimethyl-L-arginyl-[protein] + 2 S-adenosyl-L-homocysteine + 2 H(+). Its function is as follows. Methylates (mono and asymmetric dimethylation) the guanidino nitrogens of arginyl residues present in a glycine and arginine-rich domain. Type I arginine methyltransferase active on both histones and non-histone proteins. Required for leaves and flowers development. Mediates the methylation of MBD7 and MED36A. The sequence is that of Protein arginine N-methyltransferase 1.1 (PRMT11) from Arabidopsis thaliana (Mouse-ear cress).